The sequence spans 115 residues: NADH-ubiquinone oxidoreductase chain 3 (115 aa).

The next 3 membrane-spanning stretches (helical) occupy residues 3–23, 55–75, and 84–104; these read FALILMTNTLLALLLMIITFW, FFLVAITFLLFDLEIALLLPL, and LPLMVMSSLLLIIILTLSLAY.

Belongs to the complex I subunit 3 family. In terms of assembly, core subunit of respiratory chain NADH dehydrogenase (Complex I) which is composed of 45 different subunits. Interacts with TMEM186. Interacts with TMEM242.

It localises to the mitochondrion inner membrane. The enzyme catalyses a ubiquinone + NADH + 5 H(+)(in) = a ubiquinol + NAD(+) + 4 H(+)(out). In terms of biological role, core subunit of the mitochondrial membrane respiratory chain NADH dehydrogenase (Complex I) which catalyzes electron transfer from NADH through the respiratory chain, using ubiquinone as an electron acceptor. Essential for the catalytic activity of complex I. This Gorilla gorilla gorilla (Western lowland gorilla) protein is NADH-ubiquinone oxidoreductase chain 3.